The following is a 506-amino-acid chain: MKQILFMDTTLRDGEQSPGVNLNEQEKLQIARQLERLGIHVMEAGFAAASEGDFQSVKRIANTIQNATVMSLARAKESDIRRAYEAVKGAVSPRLHVFLATSDIHMKYKLCMSKEDVLDSIHRSVTLGKSLFPTVQFSAEDATRTARDFLAEAIEVAIRAGANVINIPDTVGYTNPEEYYSLFKYLQESVPSYEKAIFSCHCHDDLGMAVANSLAAVEGGALQVEGTINGIGERAGNAALEEVAVALHIRKDFYKAEPSITLKEIKATSTLVSRLTGMVVPKNKAIVGANAFAHESGIHQDGVLKEVTTYEIIEPALVGESQNLFVLGKHSGRHAFTEKMKELGYEFTNDERDAVFEAFKKLADRKKEITEEDLRALMLGEAAFAAQQYNITQLQVHFVSNSTQCATVVLKDEEGNVFEDAATGSGSIEAIYNAIQRILGLECELADYRIQSITQGQDALAHVHVELKEGAHQVSGFGVAQDVLEASARAYVHAAGKLKSFIQLVK.

Residues 4–266 (ILFMDTTLRD…EPSITLKEIK (263 aa)) enclose the Pyruvate carboxyltransferase domain. Mn(2+) contacts are provided by D13, H201, H203, and N237. The interval 390 to 506 (NITQLQVHFV…KLKSFIQLVK (117 aa)) is regulatory domain.

This sequence belongs to the alpha-IPM synthase/homocitrate synthase family. LeuA type 1 subfamily. In terms of assembly, homodimer. Mn(2+) is required as a cofactor.

It is found in the cytoplasm. It carries out the reaction 3-methyl-2-oxobutanoate + acetyl-CoA + H2O = (2S)-2-isopropylmalate + CoA + H(+). It functions in the pathway amino-acid biosynthesis; L-leucine biosynthesis; L-leucine from 3-methyl-2-oxobutanoate: step 1/4. Catalyzes the condensation of the acetyl group of acetyl-CoA with 3-methyl-2-oxobutanoate (2-ketoisovalerate) to form 3-carboxy-3-hydroxy-4-methylpentanoate (2-isopropylmalate). The chain is 2-isopropylmalate synthase from Bacillus thuringiensis subsp. konkukian (strain 97-27).